The following is a 313-amino-acid chain: Ribosomal protein L11 methyltransferase (313 aa).

Residues Thr161, Gly182, Asp204, and Asn246 each coordinate S-adenosyl-L-methionine.

This sequence belongs to the methyltransferase superfamily. PrmA family.

It localises to the cytoplasm. The enzyme catalyses L-lysyl-[protein] + 3 S-adenosyl-L-methionine = N(6),N(6),N(6)-trimethyl-L-lysyl-[protein] + 3 S-adenosyl-L-homocysteine + 3 H(+). Its function is as follows. Methylates ribosomal protein L11. The polypeptide is Ribosomal protein L11 methyltransferase (Acetivibrio thermocellus (strain ATCC 27405 / DSM 1237 / JCM 9322 / NBRC 103400 / NCIMB 10682 / NRRL B-4536 / VPI 7372) (Clostridium thermocellum)).